Here is a 519-residue protein sequence, read N- to C-terminus: SMR domain-containing protein At5g58720 (519 aa).

The segment covering 1–15 (MKQKNQHKKKKKRSC) has biased composition (basic residues). Disordered regions lie at residues 1–47 (MKQK…REIE) and 92–128 (ESGDDPSTSSVASGSSGQETASTSEYGAGSSSSCSED). A compositionally biased stretch (basic and acidic residues) spans 28–47 (GNKKDVEEERKDGEGKREIE). The segment covering 98 to 127 (STSSVASGSSGQETASTSEYGAGSSSSCSE) has biased composition (low complexity). Residues 428 to 502 (IDLHGQHVKP…NRGTLLIKLD (75 aa)) enclose the Smr domain.

Interacts with PRL1.

The protein is SMR domain-containing protein At5g58720 of Arabidopsis thaliana (Mouse-ear cress).